Consider the following 380-residue polypeptide: Cystathionine gamma-synthase (380 aa).

An N6-(pyridoxal phosphate)lysine modification is found at Lys-195.

Belongs to the trans-sulfuration enzymes family. Homotetramer. Requires pyridoxal 5'-phosphate as cofactor.

It is found in the cytoplasm. The enzyme catalyses O-succinyl-L-homoserine + L-cysteine = L,L-cystathionine + succinate + H(+). The protein operates within amino-acid biosynthesis; L-methionine biosynthesis via de novo pathway; L-cystathionine from O-succinyl-L-homoserine: step 1/1. With respect to regulation, four natural products, alpha-lapachone, 9-hydroxy-alpha-lapachone, Paulownin, and Yangambin, show strong inhibitory activities against CGS. All these four inhibitors prevent the binding of OSHS to CGS in a non-competitive fashion. These compounds are specific inhibitors against CGS from H.pylori relative to E.coli since they exhibit very low inhibition activities against CGS from E.coli. Catalyzes the formation of L-cystathionine from O-succinyl-L-homoserine (OSHS) and L-cysteine, via a gamma-replacement reaction. In the absence of thiol, catalyzes gamma-elimination to form 2-oxobutanoate, succinate and ammonia. This chain is Cystathionine gamma-synthase (metB), found in Helicobacter pylori (Campylobacter pylori).